We begin with the raw amino-acid sequence, 402 residues long: Putative F-box protein At3g20030 (402 aa).

The region spanning 1–56 (MTMMSDLSQDLLEEILSRVPRTSLGAVRSTCKRWNTLFKDRILCKAEETRDQFRFI) is the F-box domain.

The protein is Putative F-box protein At3g20030 of Arabidopsis thaliana (Mouse-ear cress).